Here is a 467-residue protein sequence, read N- to C-terminus: Xanthan biosynthesis protein XanB (467 aa).

It belongs to the mannose-6-phosphate isomerase type 2 family.

It catalyses the reaction D-mannose 6-phosphate = D-fructose 6-phosphate. The enzyme catalyses alpha-D-mannose 1-phosphate + GTP + H(+) = GDP-alpha-D-mannose + diphosphate. The protein operates within nucleotide-sugar biosynthesis; GDP-alpha-D-mannose biosynthesis; GDP-alpha-D-mannose from alpha-D-mannose 1-phosphate (GTP route): step 1/1. Its pathway is nucleotide-sugar biosynthesis; GDP-alpha-D-mannose biosynthesis; alpha-D-mannose 1-phosphate from D-fructose 6-phosphate: step 1/2. Functionally, involved in xanthan production. The sequence is that of Xanthan biosynthesis protein XanB (xanB) from Xanthomonas campestris pv. campestris (strain ATCC 33913 / DSM 3586 / NCPPB 528 / LMG 568 / P 25).